The primary structure comprises 702 residues: Heparin-sulfate lyase (702 aa).

Residues 1-17 form the signal peptide; that stretch reads MKNIFFICFCALFAFSG. Y314 acts as the Proton acceptor in catalysis.

Belongs to the polysaccharide lyase 12 family.

The protein localises to the periplasm. It catalyses the reaction Elimination of sulfate, appears to act on linkages between N-acetyl-D-glucosamine and uronate. Product is an unsaturated sugar.. Functionally, specifically cleaves heparan sulfate-rich regions of acidic polysaccharides. Does not act on N,O-desulfated glucosamine or N-acetyl-O-sulfated glucosamine linkages. Functions in cleaving metazoan heparan sulfate and providing carbon, nitrogen and sulfate sources for microorganisms. This is Heparin-sulfate lyase (hepC) from Bacteroides thetaiotaomicron (strain ATCC 29148 / DSM 2079 / JCM 5827 / CCUG 10774 / NCTC 10582 / VPI-5482 / E50).